Consider the following 742-residue polypeptide: MLKLFSAFRKNKIWDFNGGIHPPEMKTQSNGTPLRQVPLAQRFVIPLKQHIGAEGELCVSVGDKVLRGQPLTRGRGKMLPVHAPTSGTVTAIAPHSTSHPSALAELSVIIDADGEDCWIPRDGWADYRSRSREELIERIHQFGVAGLGGAGFPTGVKLQGGGDKIETLIINAAECEPYITADDRLMQDCAAQVVEGIRILAHILQPREILIGIEDNKPQAISMLRAVLADSHDISLRVIPTKYPSGGAKQLTYILTGKQVPHGGRSSDIGVLMQNVGTAYAVKRAVIDGEPITERVVTLTGEAIARPGNVWARLGTPVRHLLNDAGFCPSADQMVIMGGPLMGFTLPWLDVPVVKITNCLLAPSANELGEPQEEQSCIRCSACADACPADLLPQQLYWFSKGQQHDKATTHNIADCIECGACAWVCPSNIPLVQYFRQEKAEIAAIRQEEKRAAEAKARFEARQARLEREKAARLERHKSAAVQPAAKDKDAIAAALARVKEKQAQATQPIVIKAGERPDNSAIIAAREARKAQARAKQAELQQTNDAATVADPRKTAVEAAIARAKARKLEQQQANAEPEEQIDPRKAAVEAAIARAKARKLEQQQANAEPEEQIDPRKAAVEAAIARAKARKLEQQQANAEPEEQIDPRKAAVEAAIARAKARKLEQQQQANAEPEEQVDPRKAAVEAAIARAKARKLEQQQQANAEPEEQVDPRKAAVAAAIARVQAKKAAQQKVVNED.

2 4Fe-4S ferredoxin-type domains span residues 369–397 (GEPQ…QQLY) and 407–436 (KATT…VQYF). [4Fe-4S] cluster-binding residues include C377, C380, C383, C387, C416, C419, C422, and C426. A disordered region spans residues 602-719 (KLEQQQANAE…PEEQVDPRKA (118 aa)).

This sequence belongs to the 4Fe4S bacterial-type ferredoxin family. RnfC subfamily. The complex is composed of six subunits: RsxA, RsxB, RsxC, RsxD, RsxE and RsxG. [4Fe-4S] cluster is required as a cofactor.

Its subcellular location is the cell inner membrane. Its function is as follows. Part of a membrane-bound complex that couples electron transfer with translocation of ions across the membrane. Required to maintain the reduced state of SoxR. In Escherichia coli O6:H1 (strain CFT073 / ATCC 700928 / UPEC), this protein is Ion-translocating oxidoreductase complex subunit C.